The chain runs to 89 residues: Otospiralin (89 aa).

The N-terminal stretch at 1-21 is a signal peptide; sequence MQPCVLWWLALGLLLGIPAGA.

The protein belongs to the otospiralin family. Ear specific. Expressed in the cochlea and vestibule, but not in the cochlear nerve, cochlear nucleus, spinal chord, muscle, cerebral cortex, cerebellum, diencephalon and olfactory bulb. In the cochlea, expressed in fibrocytes of the spiral limbus, spiral ligament and suprastrial zone. In the vestibule, expressed in cells located to the stroma below the macular and crista sensory epithelia and in the subepithelial layer of the walls of semicircular canals and maculae.

It localises to the secreted. Its function is as follows. May be essential for the survival of the neurosensory epithelium of the inner ear. The polypeptide is Otospiralin (Otos) (Rattus norvegicus (Rat)).